A 128-amino-acid chain; its full sequence is uncharacterized protein (128 aa).

An S1 motif domain is found at 6–74; the sequence is GSKLQGKITG…KDGKIGLSIK (69 aa). Residues 72-128 are disordered; sequence SIKKAKDRPQARPRNDFRPKESFEQKMNKFLKDSEDRLSSLKRNTESKRGGRGARRG. A compositionally biased stretch (basic and acidic residues) spans 78–120; the sequence is DRPQARPRNDFRPKESFEQKMNKFLKDSEDRLSSLKRNTESKR.

It belongs to the peptidase U57 family.

This is an uncharacterized protein from Bacillus subtilis (strain 168).